The following is a 279-amino-acid chain: NADPH-dependent 7-cyano-7-deazaguanine reductase (279 aa).

86-88 (IES) provides a ligand contact to substrate. 88–89 (SK) contributes to the NADPH binding site. The active-site Thioimide intermediate is the Cys187. Asp194 serves as the catalytic Proton donor. A substrate-binding site is contributed by 226-227 (HE). 255–256 (RG) provides a ligand contact to NADPH.

This sequence belongs to the GTP cyclohydrolase I family. QueF type 2 subfamily. In terms of assembly, homodimer.

Its subcellular location is the cytoplasm. The catalysed reaction is 7-aminomethyl-7-carbaguanine + 2 NADP(+) = 7-cyano-7-deazaguanine + 2 NADPH + 3 H(+). It functions in the pathway tRNA modification; tRNA-queuosine biosynthesis. Its function is as follows. Catalyzes the NADPH-dependent reduction of 7-cyano-7-deazaguanine (preQ0) to 7-aminomethyl-7-deazaguanine (preQ1). The polypeptide is NADPH-dependent 7-cyano-7-deazaguanine reductase (Haemophilus ducreyi (strain 35000HP / ATCC 700724)).